A 366-amino-acid polypeptide reads, in one-letter code: Endophilin-A (366 aa).

Positions 18–248 (TEKMGGAEGT…LQEKRSEAES (231 aa)) constitute a BAR domain. Positions 227–247 (QCADVLRGLQETLQEKRSEAE) form a coiled coil. A disordered region spans residues 266–295 (GGGGGLNEDGTPSHISSSASPLPSPMRSPA). Residues 277-294 (PSHISSSASPLPSPMRSP) are compositionally biased toward low complexity. Positions 305–364 (QQQPCCQALYDFDPENPGELGFKENDIITLLNRVDDNWYEGSVNGRTGYFPQSYVQVQVP) constitute an SH3 domain.

This sequence belongs to the endophilin family.

The protein resides in the cytoplasm. Its subcellular location is the membrane. In terms of biological role, required presynaptically at the neuromuscular junction. Implicated in synaptic vesicle endocytosis. The polypeptide is Endophilin-A (Drosophila willistoni (Fruit fly)).